The chain runs to 719 residues: Photosystem I P700 chlorophyll a apoprotein A1 (719 aa).

8 helical membrane passes run 59-82 (IFGA…FHGA), 145-168 (LYCT…FHYH), 184-208 (LNHH…HVSL), 280-298 (TAHH…GHMY), 335-358 (WHAQ…HHMY), 374-400 (LSLF…IFMV), 422-444 (AIIS…LYIH), and 520-538 (FLVH…LILL). 2 residues coordinate [4Fe-4S] cluster: Cys562 and Cys571. 2 helical membrane-spanning segments follow: residues 578 to 599 (HVFL…HFSW) and 653 to 675 (LSAY…MFLF). His664 lines the chlorophyll a' pocket. Residues Met672 and Tyr680 each contribute to the chlorophyll a site. Trp681 is a phylloquinone binding site. Residues 713-719 (AVGVTHT) form a helical membrane-spanning segment.

This sequence belongs to the PsaA/PsaB family. In terms of assembly, the PsaA/B heterodimer binds the P700 chlorophyll special pair and subsequent electron acceptors. PSI consists of a core antenna complex that captures photons, and an electron transfer chain that converts photonic excitation into a charge separation. The eukaryotic PSI reaction center is composed of at least 11 subunits. It depends on P700 is a chlorophyll a/chlorophyll a' dimer, A0 is one or more chlorophyll a, A1 is one or both phylloquinones and FX is a shared 4Fe-4S iron-sulfur center. as a cofactor.

The protein localises to the plastid. It localises to the chloroplast thylakoid membrane. It catalyses the reaction reduced [plastocyanin] + hnu + oxidized [2Fe-2S]-[ferredoxin] = oxidized [plastocyanin] + reduced [2Fe-2S]-[ferredoxin]. PsaA and PsaB bind P700, the primary electron donor of photosystem I (PSI), as well as the electron acceptors A0, A1 and FX. PSI is a plastocyanin-ferredoxin oxidoreductase, converting photonic excitation into a charge separation, which transfers an electron from the donor P700 chlorophyll pair to the spectroscopically characterized acceptors A0, A1, FX, FA and FB in turn. Oxidized P700 is reduced on the lumenal side of the thylakoid membrane by plastocyanin. This Asplenium nidus (Bird's nest fern) protein is Photosystem I P700 chlorophyll a apoprotein A1.